We begin with the raw amino-acid sequence, 172 residues long: UPF0114 protein PMI3225 (172 aa).

Transmembrane regions (helical) follow at residues 15–35 (LFAP…IKFF), 57–77 (LLSL…IFSG), 108–128 (KVAA…FMDL), and 136–156 (LLWY…MGYL).

It belongs to the UPF0114 family.

Its subcellular location is the cell membrane. This is UPF0114 protein PMI3225 from Proteus mirabilis (strain HI4320).